The primary structure comprises 138 residues: Aspartate 1-decarboxylase (138 aa).

Residue S25 is the Schiff-base intermediate with substrate; via pyruvic acid of the active site. Position 25 is a pyruvic acid (Ser) (S25). A substrate-binding site is contributed by T57. The Proton donor role is filled by Y58. 73-75 (GAA) contributes to the substrate binding site.

It belongs to the PanD family. Heterooctamer of four alpha and four beta subunits. The cofactor is pyruvate. Is synthesized initially as an inactive proenzyme, which is activated by self-cleavage at a specific serine bond to produce a beta-subunit with a hydroxyl group at its C-terminus and an alpha-subunit with a pyruvoyl group at its N-terminus.

It is found in the cytoplasm. The catalysed reaction is L-aspartate + H(+) = beta-alanine + CO2. It functions in the pathway cofactor biosynthesis; (R)-pantothenate biosynthesis; beta-alanine from L-aspartate: step 1/1. In terms of biological role, catalyzes the pyruvoyl-dependent decarboxylation of aspartate to produce beta-alanine. The protein is Aspartate 1-decarboxylase of Renibacterium salmoninarum (strain ATCC 33209 / DSM 20767 / JCM 11484 / NBRC 15589 / NCIMB 2235).